Reading from the N-terminus, the 686-residue chain is Osmo-dependent choline transporter BetT2 (686 aa).

Residues 1-22 lie on the Cytoplasmic side of the membrane; it reads MATDNPRAVDDQETHPKDRLNR. Residues 23–43 form a helical membrane-spanning segment; it reads VVFYVSALIILIFSLTTILFN. Residues 44 to 60 are Periplasmic-facing; it reads DFANRALNQVLDWVSST. A helical transmembrane segment spans residues 61–81; sequence FSWYYLLAATLYMVFVIFIAC. Residues 82 to 100 are Cytoplasmic-facing; sequence SRYGNIKLGPKHSKPEFSL. The chain crosses the membrane as a helical span at residues 101-121; that stretch reads LSWSAMLFSAGIGIDLMFFSV. The Periplasmic segment spans residues 122–150; the sequence is AEPLSHYMHPPVGEGQTYEAARQGMVWTL. Residues 151 to 171 form a helical membrane-spanning segment; sequence FHYGLTGWCMYALIGMALGYF. Topologically, residues 172–203 are cytoplasmic; that stretch reads SYRYNLPLTIRSALYPIFGKKINGPIGHSVDT. A helical transmembrane segment spans residues 204-224; it reads AAVIGTIFGIATTCGIGVVQL. The Periplasmic segment spans residues 225–237; that stretch reads NYGLHVLFDLPEN. The helical transmembrane segment at 238–258 threads the bilayer; that stretch reads LWVQTALILVAVIITIISVTS. Residues 259 to 265 are Cytoplasmic-facing; it reads GVNKGLR. The helical transmembrane segment at 266-286 threads the bilayer; that stretch reads ILSEVNIYVSVGLMLFILFLG. Residues 287-325 lie on the Periplasmic side of the membrane; that stretch reads NTEFLLNALVQNVGDYLSRFPSLALESFAFDQPKEWMNS. The chain crosses the membrane as a helical span at residues 326-346; that stretch reads WTLFFWAWWVAWSPFVGLFLA. Over 347 to 356 the chain is Cytoplasmic; sequence RISRGRTIRE. A helical transmembrane segment spans residues 357–377; that stretch reads FVSGTLIIPLLFTLTWLSIFG. Over 378-412 the chain is Periplasmic; sequence NSALHNVIFDGNIALAETVLSNPAHGFYDLLAQYP. The chain crosses the membrane as a helical span at residues 413–433; sequence WFPFIAGVATITGLLFYVTSA. The Cytoplasmic segment spans residues 434–459; the sequence is DSGALVLGNFTTQFTNIDHDAPRWLS. A helical transmembrane segment spans residues 460–480; the sequence is VFWAVAIGLLTLAMLMTNGIT. Residues 481–484 are Periplasmic-facing; that stretch reads ALQN. Residues 485–505 form a helical membrane-spanning segment; it reads ATIIMGLPFSFVMFLVMAGLY. The Cytoplasmic segment spans residues 506–686; sequence KSLRLEDYRQ…NRPLFPDPKA (181 aa).

Belongs to the BCCT transporter (TC 2.A.15) family.

The protein localises to the cell inner membrane. Uptake of choline in the presence of high salinity. May primarily serve for osmoprotection. This is Osmo-dependent choline transporter BetT2 from Acinetobacter baylyi (strain ATCC 33305 / BD413 / ADP1).